The following is a 262-amino-acid chain: Cytochrome c oxidase subunit 3 (262 aa).

A run of 7 helical transmembrane segments spans residues Pro13 to Met33, Gly38 to Trp58, Gly82 to Phe102, Thr134 to Gly154, Gly159 to Leu179, Ala200 to Phe220, and Ala237 to Tyr257.

It belongs to the cytochrome c oxidase subunit 3 family. In terms of assembly, component of the cytochrome c oxidase (complex IV, CIV), a multisubunit enzyme composed of a catalytic core of 3 subunits and several supernumerary subunits. The complex exists as a monomer or a dimer and forms supercomplexes (SCs) in the inner mitochondrial membrane with ubiquinol-cytochrome c oxidoreductase (cytochrome b-c1 complex, complex III, CIII).

It localises to the mitochondrion inner membrane. It carries out the reaction 4 Fe(II)-[cytochrome c] + O2 + 8 H(+)(in) = 4 Fe(III)-[cytochrome c] + 2 H2O + 4 H(+)(out). Its function is as follows. Component of the cytochrome c oxidase, the last enzyme in the mitochondrial electron transport chain which drives oxidative phosphorylation. The respiratory chain contains 3 multisubunit complexes succinate dehydrogenase (complex II, CII), ubiquinol-cytochrome c oxidoreductase (cytochrome b-c1 complex, complex III, CIII) and cytochrome c oxidase (complex IV, CIV), that cooperate to transfer electrons derived from NADH and succinate to molecular oxygen, creating an electrochemical gradient over the inner membrane that drives transmembrane transport and the ATP synthase. Cytochrome c oxidase is the component of the respiratory chain that catalyzes the reduction of oxygen to water. Electrons originating from reduced cytochrome c in the intermembrane space (IMS) are transferred via the dinuclear copper A center (CU(A)) of subunit 2 and heme A of subunit 1 to the active site in subunit 1, a binuclear center (BNC) formed by heme A3 and copper B (CU(B)). The BNC reduces molecular oxygen to 2 water molecules using 4 electrons from cytochrome c in the IMS and 4 protons from the mitochondrial matrix. This Prototheca wickerhamii protein is Cytochrome c oxidase subunit 3 (COX3).